The chain runs to 101 residues: TrfB transcriptional repressor protein (101 aa).

The segment at residues glutamine 37–histidine 56 is a DNA-binding region (H-T-H motif).

Its function is as follows. In conjunction with KorB, inhibits the transcription of kilA, trfA and korAB operons. In conjunction with KorC is responsible for the negative control of kilC and kilE operons. The sequence is that of TrfB transcriptional repressor protein (trfB) from Escherichia coli.